The chain runs to 512 residues: 2-isopropylmalate synthase (512 aa).

Positions 4 to 266 constitute a Pyruvate carboxyltransferase domain; sequence IQFFDTTLRD…ETNIVLNQFK (263 aa). Aspartate 13, histidine 201, histidine 203, and asparagine 237 together coordinate Mn(2+). The regulatory domain stretch occupies residues 390-512; that stretch reads ELKHLQVQYV…SKQADFEEVK (123 aa).

This sequence belongs to the alpha-IPM synthase/homocitrate synthase family. LeuA type 1 subfamily. In terms of assembly, homodimer. Requires Mn(2+) as cofactor.

Its subcellular location is the cytoplasm. It catalyses the reaction 3-methyl-2-oxobutanoate + acetyl-CoA + H2O = (2S)-2-isopropylmalate + CoA + H(+). Its pathway is amino-acid biosynthesis; L-leucine biosynthesis; L-leucine from 3-methyl-2-oxobutanoate: step 1/4. In terms of biological role, catalyzes the condensation of the acetyl group of acetyl-CoA with 3-methyl-2-oxobutanoate (2-ketoisovalerate) to form 3-carboxy-3-hydroxy-4-methylpentanoate (2-isopropylmalate). The chain is 2-isopropylmalate synthase from Listeria monocytogenes serotype 4a (strain HCC23).